The following is a 616-amino-acid chain: Dihydroxy-acid dehydratase (616 aa).

Mg(2+) is bound at residue Asp81. Cys122 contacts [2Fe-2S] cluster. Residues Asp123 and Lys124 each coordinate Mg(2+). Residue Lys124 is modified to N6-carboxylysine. A [2Fe-2S] cluster-binding site is contributed by Cys195. Glu491 is a Mg(2+) binding site. Catalysis depends on Ser517, which acts as the Proton acceptor.

The protein belongs to the IlvD/Edd family. In terms of assembly, homodimer. It depends on [2Fe-2S] cluster as a cofactor. Requires Mg(2+) as cofactor.

It carries out the reaction (2R)-2,3-dihydroxy-3-methylbutanoate = 3-methyl-2-oxobutanoate + H2O. It catalyses the reaction (2R,3R)-2,3-dihydroxy-3-methylpentanoate = (S)-3-methyl-2-oxopentanoate + H2O. It functions in the pathway amino-acid biosynthesis; L-isoleucine biosynthesis; L-isoleucine from 2-oxobutanoate: step 3/4. The protein operates within amino-acid biosynthesis; L-valine biosynthesis; L-valine from pyruvate: step 3/4. In terms of biological role, functions in the biosynthesis of branched-chain amino acids. Catalyzes the dehydration of (2R,3R)-2,3-dihydroxy-3-methylpentanoate (2,3-dihydroxy-3-methylvalerate) into 2-oxo-3-methylpentanoate (2-oxo-3-methylvalerate) and of (2R)-2,3-dihydroxy-3-methylbutanoate (2,3-dihydroxyisovalerate) into 2-oxo-3-methylbutanoate (2-oxoisovalerate), the penultimate precursor to L-isoleucine and L-valine, respectively. This chain is Dihydroxy-acid dehydratase, found in Tolumonas auensis (strain DSM 9187 / NBRC 110442 / TA 4).